Consider the following 281-residue polypeptide: MGAITLDGKATRDEIFVDLKQRVAALTAAGRTPGLGTILVGDDPGSQAYVRGKHADCAKVGITSIRRDLPADISTAALNDTIDELNANPECTGYIVQLPLPKQLDENAALERVDPDKDADGLHPTNLGRLVLNNPAPLPCTPRGIVHLLRRYDAEIAGAHVVVIGRGVTVGRPLGLLLTRRSENATVTLCHTGTRDLPALTRQADIIVAAVGVPHLLTADMVRPGAAVLDVGVSRVDGKLAGDVHPDVWEVAGHVSPNPGGVGPLTRAFLLTNVVELAERE.

NADP(+)-binding positions include 165–167 (GRG), threonine 192, and valine 233.

It belongs to the tetrahydrofolate dehydrogenase/cyclohydrolase family. Homodimer.

The enzyme catalyses (6R)-5,10-methylene-5,6,7,8-tetrahydrofolate + NADP(+) = (6R)-5,10-methenyltetrahydrofolate + NADPH. The catalysed reaction is (6R)-5,10-methenyltetrahydrofolate + H2O = (6R)-10-formyltetrahydrofolate + H(+). Its pathway is one-carbon metabolism; tetrahydrofolate interconversion. Functionally, catalyzes the oxidation of 5,10-methylenetetrahydrofolate to 5,10-methenyltetrahydrofolate and then the hydrolysis of 5,10-methenyltetrahydrofolate to 10-formyltetrahydrofolate. The protein is Bifunctional protein FolD of Mycolicibacterium paratuberculosis (strain ATCC BAA-968 / K-10) (Mycobacterium paratuberculosis).